The chain runs to 555 residues: Transmembrane protein 87B (555 aa).

An N-terminal signal peptide occupies residues Met1 to Ala42. Topologically, residues Val43 to Pro216 are lumenal. Residues Asn68, Asn160, and Asn198 are each glycosylated (N-linked (GlcNAc...) asparagine). The helical transmembrane segment at Leu217 to Leu237 threads the bilayer. Residues Trp238 to Arg248 are Cytoplasmic-facing. The chain crosses the membrane as a helical span at residues Ile249–Ser269. Residues Glu270–Arg300 are Lumenal-facing. N-linked (GlcNAc...) asparagine glycosylation occurs at Asn275. The helical transmembrane segment at Leu301–Met321 threads the bilayer. At His322 to Arg323 the chain is on the cytoplasmic side. The chain crosses the membrane as a helical span at residues Val324 to Ile344. Residues Gly345 to Ala351 are Lumenal-facing. Residues Val352–Ile372 traverse the membrane as a helical segment. At Ser373 to Arg394 the chain is on the cytoplasmic side. Residues His395–Thr415 traverse the membrane as a helical segment. The Lumenal segment spans residues Lys416–Glu429. Residues Leu430–Phe450 form a helical membrane-spanning segment. Over Leu451–Met555 the chain is Cytoplasmic. Ser470, Ser497, and Ser534 each carry phosphoserine.

It belongs to the LU7TM family. TMEM87 subfamily.

The protein resides in the golgi apparatus membrane. In terms of biological role, may be involved in retrograde transport from endosomes to the trans-Golgi network (TGN). The protein is Transmembrane protein 87B of Mus musculus (Mouse).